Consider the following 617-residue polypeptide: uncharacterized protein (617 aa).

Positions 387–396 (NGGMSATQLP) are enriched in polar residues. 2 disordered regions span residues 387 to 419 (NGGMSATQLPAPTRDSQRQAAANQFQQRTHAAP) and 443 to 599 (YDDF…NNEQ). Positions 404-414 (RQAAANQFQQR) are enriched in low complexity. Polar residues predominate over residues 453-474 (QPLTQQQKDAARQRYQSASPEQ). 2 stretches are compositionally biased toward basic and acidic residues: residues 490–499 (QRREAARERI) and 522–531 (QRRDAARERI). Over residues 549 to 570 (RPLNQQQRDNARQRVQSASPEQ) the composition is skewed to polar residues. Basic and acidic residues predominate over residues 572–585 (QVFREKVQESRPQR). The span at 586–599 (LNDSNHTVRLNNEQ) shows a compositional bias: polar residues.

This is an uncharacterized protein from Escherichia coli (strain K12).